The following is a 175-amino-acid chain: Protein her-1 (175 aa).

The signal sequence occupies residues 1–18 (MRYLPIFVFLGSFGYTET). N-linked (GlcNAc...) asparagine glycans are attached at residues Asn-98 and Asn-163.

Its subcellular location is the secreted. In terms of biological role, dictates male development. Probably plays a direct role in cell signaling during C.elegans sex determination. Inhibits the function of tra-2a. The sequence is that of Protein her-1 (her-1) from Caenorhabditis elegans.